A 1299-amino-acid chain; its full sequence is Probable membrane antigen 75 (1299 aa).

It is found in the virion tegument. This is Probable membrane antigen 75 (75) from Saimiriine herpesvirus 2 (strain 11) (SaHV-2).